The sequence spans 155 residues: Ribosome maturation factor RimP (155 aa).

This sequence belongs to the RimP family.

It localises to the cytoplasm. Its function is as follows. Required for maturation of 30S ribosomal subunits. This Salinibacter ruber (strain DSM 13855 / M31) protein is Ribosome maturation factor RimP.